Reading from the N-terminus, the 550-residue chain is Silent protein UshA(0) (550 aa).

The signal sequence occupies residues 1–25 (MKFLKRGVALALLAAFALTTQPAQA). A divalent metal cation-binding residues include aspartate 41, histidine 43, aspartate 84, asparagine 116, histidine 217, histidine 252, and glutamine 254. Cysteines 258 and 275 form a disulfide. Substrate contacts are provided by residues phenylalanine 429 and 498 to 504 (FNATGGD).

This sequence belongs to the 5'-nucleotidase family. Requires a divalent metal cation as cofactor.

Its subcellular location is the periplasm. The sequence is that of Silent protein UshA(0) (ushA) from Salmonella typhimurium (strain LT2 / SGSC1412 / ATCC 700720).